Reading from the N-terminus, the 328-residue chain is Flotillin-like protein FloA (328 aa).

Transmembrane regions (helical) follow at residues 9–29 (LLITGGGLIALAVFFTFVPVG) and 30–50 (LWISSFAAGVHVSIFTLIGMR).

This sequence belongs to the flotillin-like FloA family. In terms of assembly, homooligomerizes.

It is found in the cell membrane. Its subcellular location is the membrane raft. Its function is as follows. Found in functional membrane microdomains (FMM) that may be equivalent to eukaryotic membrane rafts. FMMs are highly dynamic and increase in number as cells age. Flotillins are thought to be important factors in membrane fluidity. This chain is Flotillin-like protein FloA, found in Exiguobacterium sp. (strain ATCC BAA-1283 / AT1b).